A 350-amino-acid chain; its full sequence is DNA polymerase IV (350 aa).

A UmuC domain is found at 4–185 (IIHIDMDCFY…LPLGKLPGIG (182 aa)). Residues Asp8 and Asp103 each contribute to the Mg(2+) site. Residue Glu104 is part of the active site.

This sequence belongs to the DNA polymerase type-Y family. Monomer. The cofactor is Mg(2+).

The protein resides in the cytoplasm. It carries out the reaction DNA(n) + a 2'-deoxyribonucleoside 5'-triphosphate = DNA(n+1) + diphosphate. Its function is as follows. Poorly processive, error-prone DNA polymerase involved in untargeted mutagenesis. Copies undamaged DNA at stalled replication forks, which arise in vivo from mismatched or misaligned primer ends. These misaligned primers can be extended by PolIV. Exhibits no 3'-5' exonuclease (proofreading) activity. May be involved in translesional synthesis, in conjunction with the beta clamp from PolIII. In Aeromonas hydrophila subsp. hydrophila (strain ATCC 7966 / DSM 30187 / BCRC 13018 / CCUG 14551 / JCM 1027 / KCTC 2358 / NCIMB 9240 / NCTC 8049), this protein is DNA polymerase IV.